The following is a 69-amino-acid chain: Large ribosomal subunit protein bL28 (69 aa).

It belongs to the bacterial ribosomal protein bL28 family.

The chain is Large ribosomal subunit protein bL28 from Aquifex aeolicus (strain VF5).